The following is a 648-amino-acid chain: Indolepyruvate oxidoreductase subunit IorA (648 aa).

2 consecutive 4Fe-4S ferredoxin-type domains span residues 585–614 (PIYQ…WDPE) and 616–645 (KKAK…KVRE). Cys594, Cys597, Cys600, Cys606, Cys625, Cys628, Cys631, and Cys635 together coordinate [4Fe-4S] cluster.

In terms of assembly, heterodimer of the IorA and IorB subunits. It depends on [4Fe-4S] cluster as a cofactor.

The catalysed reaction is indole-3-pyruvate + 2 oxidized [2Fe-2S]-[ferredoxin] + CoA = (indol-3-yl)acetyl-CoA + 2 reduced [2Fe-2S]-[ferredoxin] + CO2 + H(+). Catalyzes the ferredoxin-dependent oxidative decarboxylation of arylpyruvates. The polypeptide is Indolepyruvate oxidoreductase subunit IorA (iorA) (Pyrococcus abyssi (strain GE5 / Orsay)).